Here is a 431-residue protein sequence, read N- to C-terminus: UDP-N-acetylglucosamine 1-carboxyvinyltransferase (431 aa).

Residue 22 to 23 participates in phosphoenolpyruvate binding; it reads KN. Arg92 lines the UDP-N-acetyl-alpha-D-glucosamine pocket. The active-site Proton donor is Asp116. UDP-N-acetyl-alpha-D-glucosamine is bound by residues 121–125, Asp307, and Ile330; that span reads RPIDQ.

The protein belongs to the EPSP synthase family. MurA subfamily.

The protein resides in the cytoplasm. It catalyses the reaction phosphoenolpyruvate + UDP-N-acetyl-alpha-D-glucosamine = UDP-N-acetyl-3-O-(1-carboxyvinyl)-alpha-D-glucosamine + phosphate. The protein operates within cell wall biogenesis; peptidoglycan biosynthesis. Its function is as follows. Cell wall formation. Adds enolpyruvyl to UDP-N-acetylglucosamine. This Lactobacillus acidophilus (strain ATCC 700396 / NCK56 / N2 / NCFM) protein is UDP-N-acetylglucosamine 1-carboxyvinyltransferase.